A 134-amino-acid chain; its full sequence is Small ribosomal subunit protein uS11 (134 aa).

This sequence belongs to the universal ribosomal protein uS11 family. Part of the 30S ribosomal subunit. Interacts with proteins S7 and S18. Binds to IF-3.

Its function is as follows. Located on the platform of the 30S subunit, it bridges several disparate RNA helices of the 16S rRNA. Forms part of the Shine-Dalgarno cleft in the 70S ribosome. This is Small ribosomal subunit protein uS11 from Salinibacter ruber (strain DSM 13855 / M31).